Reading from the N-terminus, the 234-residue chain is Transcriptional activator protein TraR (234 aa).

Residues T167–K232 enclose the HTH luxR-type domain. A DNA-binding region (H-T-H motif) is located at residues M191–R210.

Belongs to the autoinducer-regulated transcriptional regulatory protein family.

In terms of biological role, positive regulation of conjugal transfer of Ti plasmids. TraR activates target genes in the presence of AAI and also activates traR and traI themselves. The sequence is that of Transcriptional activator protein TraR (traR) from Rhizobium radiobacter (Agrobacterium tumefaciens).